Consider the following 909-residue polypeptide: UPF0182 protein Moth_1139 (909 aa).

The next 7 helical transmembrane spans lie at 8–28 (FCLL…SHFL), 51–71 (VGIR…NLLF), 103–123 (LGIL…PLAA), 165–185 (LLIT…FIFN), 201–221 (LVHF…GFRL), 245–265 (LLPG…IIVL), and 277–297 (AGIL…PLAV). Positions 843–862 (PAPAASPQPPSQAATGSPGN) are disordered.

The protein belongs to the UPF0182 family.

The protein resides in the cell membrane. This Moorella thermoacetica (strain ATCC 39073 / JCM 9320) protein is UPF0182 protein Moth_1139.